Consider the following 222-residue polypeptide: Cytidylate kinase (222 aa).

7–15 serves as a coordination point for ATP; it reads GPSASGKST.

The protein belongs to the cytidylate kinase family. Type 1 subfamily.

It localises to the cytoplasm. It carries out the reaction CMP + ATP = CDP + ADP. It catalyses the reaction dCMP + ATP = dCDP + ADP. The sequence is that of Cytidylate kinase from Aquifex aeolicus (strain VF5).